Reading from the N-terminus, the 82-residue chain is Small ribosomal subunit protein bS18 (82 aa).

The interval 1 to 20 (MSEASSAPVRRPFHRRRKTC) is disordered.

It belongs to the bacterial ribosomal protein bS18 family. As to quaternary structure, part of the 30S ribosomal subunit. Forms a tight heterodimer with protein bS6.

In terms of biological role, binds as a heterodimer with protein bS6 to the central domain of the 16S rRNA, where it helps stabilize the platform of the 30S subunit. This Rhizobium etli (strain CIAT 652) protein is Small ribosomal subunit protein bS18.